Consider the following 439-residue polypeptide: Acyl-lipid (8-3)-desaturase (439 aa).

Residues 7-88 (GRSAAREMTA…LPKLDASKVE (82 aa)) enclose the Cytochrome b5 heme-binding domain. 2 residues coordinate heme: His-40 and His-66. Residues 123–143 (IPHMIYRVVEIVALFALSFWL) form a helical membrane-spanning segment. Positions 171-175 (HEMGH) match the Histidine box-1 motif. A Histidine box-2 motif is present at residues 208-213 (HSKHHA). 3 consecutive transmembrane segments (helical) span residues 254-274 (AYLF…LYLH), 287-307 (FVWI…LGYS), and 312-332 (VGMY…QFAV). Residues 376–380 (QIEHH) carry the Histidine box-3 motif.

Belongs to the fatty acid desaturase type 1 family. Fe(2+) is required as a cofactor.

Its subcellular location is the membrane. It carries out the reaction an (8Z,11Z,14Z)-icosatrienoyl-containing glycerolipid + 2 Fe(II)-[cytochrome b5] + O2 + 2 H(+) = (5Z,8Z,11Z,14Z)-eicosatetraenoyl-containing glycerolipid + 2 Fe(III)-[cytochrome b5] + 2 H2O. The catalysed reaction is an (8Z,11Z,14Z,17Z)-eicosatetraenoyl-containing glycerolipid + 2 Fe(II)-[cytochrome b5] + O2 + 2 H(+) = a (5Z,8Z,11Z,14Z,17Z)-eicosapentaenoyl-containing glycerolipid + 2 Fe(III)-[cytochrome b5] + 2 H2O. Fatty acid desaturase that introduces a cis double bond at the 5-position in 20-carbon polyunsaturated fatty acids incorporated in a glycerolipid that contain a Delta(8) double bond. This is Acyl-lipid (8-3)-desaturase from Thraustochytrium sp.